Reading from the N-terminus, the 185-residue chain is Elongation factor P (185 aa).

It belongs to the elongation factor P family.

The protein resides in the cytoplasm. The protein operates within protein biosynthesis; polypeptide chain elongation. Involved in peptide bond synthesis. Stimulates efficient translation and peptide-bond synthesis on native or reconstituted 70S ribosomes in vitro. Probably functions indirectly by altering the affinity of the ribosome for aminoacyl-tRNA, thus increasing their reactivity as acceptors for peptidyl transferase. The protein is Elongation factor P of Cyanothece sp. (strain PCC 7425 / ATCC 29141).